We begin with the raw amino-acid sequence, 177 residues long: ATP synthase subunit delta (177 aa).

This sequence belongs to the ATPase delta chain family. In terms of assembly, F-type ATPases have 2 components, F(1) - the catalytic core - and F(0) - the membrane proton channel. F(1) has five subunits: alpha(3), beta(3), gamma(1), delta(1), epsilon(1). F(0) has three main subunits: a(1), b(2) and c(10-14). The alpha and beta chains form an alternating ring which encloses part of the gamma chain. F(1) is attached to F(0) by a central stalk formed by the gamma and epsilon chains, while a peripheral stalk is formed by the delta and b chains.

The protein resides in the cell inner membrane. In terms of biological role, f(1)F(0) ATP synthase produces ATP from ADP in the presence of a proton or sodium gradient. F-type ATPases consist of two structural domains, F(1) containing the extramembraneous catalytic core and F(0) containing the membrane proton channel, linked together by a central stalk and a peripheral stalk. During catalysis, ATP synthesis in the catalytic domain of F(1) is coupled via a rotary mechanism of the central stalk subunits to proton translocation. Its function is as follows. This protein is part of the stalk that links CF(0) to CF(1). It either transmits conformational changes from CF(0) to CF(1) or is implicated in proton conduction. The polypeptide is ATP synthase subunit delta (Azobacteroides pseudotrichonymphae genomovar. CFP2).